A 238-amino-acid chain; its full sequence is Succinate dehydrogenase iron-sulfur subunit (238 aa).

The 97-residue stretch at 1–97 (MKLEFSIYRY…KIVIRPLPGL (97 aa)) folds into the 2Fe-2S ferredoxin-type domain. Cys-55, Cys-60, and Cys-75 together coordinate [2Fe-2S] cluster. The region spanning 139–169 (QREKLDGLYECILCACCSTSCPSFWWNPDKF) is the 4Fe-4S ferredoxin-type domain. 3 residues coordinate [4Fe-4S] cluster: Cys-149, Cys-152, and Cys-155. [3Fe-4S] cluster is bound at residue Cys-159. A ubiquinone is bound at residue Trp-164. [3Fe-4S] cluster contacts are provided by Cys-206 and Cys-212. [4Fe-4S] cluster is bound at residue Cys-216.

This sequence belongs to the succinate dehydrogenase/fumarate reductase iron-sulfur protein family. As to quaternary structure, part of an enzyme complex containing four subunits: a flavoprotein, an iron-sulfur, cytochrome b-556, and a hydrophobic anchor protein. It depends on [2Fe-2S] cluster as a cofactor. [3Fe-4S] cluster serves as cofactor. The cofactor is [4Fe-4S] cluster.

The catalysed reaction is a quinone + succinate = fumarate + a quinol. The protein operates within carbohydrate metabolism; tricarboxylic acid cycle; fumarate from succinate (bacterial route): step 1/1. Its function is as follows. Two distinct, membrane-bound, FAD-containing enzymes are responsible for the catalysis of fumarate and succinate interconversion; the fumarate reductase is used in anaerobic growth, and the succinate dehydrogenase is used in aerobic growth. This chain is Succinate dehydrogenase iron-sulfur subunit (sdhB), found in Salmonella typhimurium (strain LT2 / SGSC1412 / ATCC 700720).